The sequence spans 769 residues: Major inner protein P1 (769 aa).

As to quaternary structure, homodimer. Associates with the polymerase complex.

The protein localises to the virion. Its function is as follows. P1 is the major inner capsid (core) protein of the polyhedral procapsid, which is responsible for genomic replication and transcription. Forms a dodecahedral shell from 60 asymmetric dimers. Binds to RNA and may be involved in genomic packaging. The polypeptide is Major inner protein P1 (P1) (Pseudomonas phage phi6 (Bacteriophage phi-6)).